Consider the following 199-residue polypeptide: Octanoyltransferase (199 aa).

Residues 27–199 enclose the BPL/LPL catalytic domain; it reads SNSCDELWLL…FVQYFLTQFK (173 aa). Residues 66 to 73, 133 to 135, and 146 to 148 each bind substrate; these read RGGQVTYH, SIG, and GIA. Cysteine 164 (acyl-thioester intermediate) is an active-site residue.

It belongs to the LipB family.

Its subcellular location is the cytoplasm. The catalysed reaction is octanoyl-[ACP] + L-lysyl-[protein] = N(6)-octanoyl-L-lysyl-[protein] + holo-[ACP] + H(+). The protein operates within protein modification; protein lipoylation via endogenous pathway; protein N(6)-(lipoyl)lysine from octanoyl-[acyl-carrier-protein]: step 1/2. Catalyzes the transfer of endogenously produced octanoic acid from octanoyl-acyl-carrier-protein onto the lipoyl domains of lipoate-dependent enzymes. Lipoyl-ACP can also act as a substrate although octanoyl-ACP is likely to be the physiological substrate. The protein is Octanoyltransferase of Legionella pneumophila (strain Paris).